The following is a 408-amino-acid chain: MAVNLQIPSESEILPVAGVEIGVAEAGIRKAGRRDLTVFRLAPGSAVAGVFTRNRFRAAPVQVCEAHLAQGGPIRALVVNTGNANAGTGAPGLKNAQDTCAALGKLLDVPAEQILPFSTGVILEPLPMDRLTAGLPAAVADLRADGWYGAAHGIMTTDTLPKIHSRRVDIGGKTVTITGISKGAGMIRPNMATMLGFLATDAGIAQPLLRQLAIELADVSFNRITVDGDTSTNDSFILIATGQAGVTVDSAGDAAYAALRDALAAAATDLAQKIVRDAEGATKFMTIRVEEAGNTEEALKVAYAVAHSPLVKTAFFASDPNLGRILAAIGYAGIDDLDVSRLRLWLGDVLVAVDGGRNPDYQEADGQRVMKQAEILVRIALGRGQVADTVYTCDFSHEYVTINADYRS.

6 residues coordinate substrate: Thr156, Lys182, Thr193, Glu279, Asn403, and Ser408. Catalysis depends on Thr193, which acts as the Nucleophile.

This sequence belongs to the ArgJ family. As to quaternary structure, heterotetramer of two alpha and two beta chains.

The protein resides in the cytoplasm. It carries out the reaction N(2)-acetyl-L-ornithine + L-glutamate = N-acetyl-L-glutamate + L-ornithine. It catalyses the reaction L-glutamate + acetyl-CoA = N-acetyl-L-glutamate + CoA + H(+). The protein operates within amino-acid biosynthesis; L-arginine biosynthesis; L-ornithine and N-acetyl-L-glutamate from L-glutamate and N(2)-acetyl-L-ornithine (cyclic): step 1/1. It functions in the pathway amino-acid biosynthesis; L-arginine biosynthesis; N(2)-acetyl-L-ornithine from L-glutamate: step 1/4. In terms of biological role, catalyzes two activities which are involved in the cyclic version of arginine biosynthesis: the synthesis of N-acetylglutamate from glutamate and acetyl-CoA as the acetyl donor, and of ornithine by transacetylation between N(2)-acetylornithine and glutamate. The polypeptide is Arginine biosynthesis bifunctional protein ArgJ (Bordetella bronchiseptica (strain ATCC BAA-588 / NCTC 13252 / RB50) (Alcaligenes bronchisepticus)).